A 1715-amino-acid polypeptide reads, in one-letter code: Sodium channel protein type 4 subunit alpha B (1715 aa).

Over 1-126 the chain is Cytoplasmic; it reads MGTLLPPVGS…IFAIKILVHS (126 aa). An I repeat occupies 108-431; sequence LLSPFNSMRI…VVAMAYAEQN (324 aa). A helical membrane pass occupies residues 127-145; it reads LFSLFIMATILTNCVFMTL. Topologically, residues 146-152 are extracellular; sequence SDPPAWS. A helical membrane pass occupies residues 153-173; it reads KTVEYVFTFIYTFEATIKVVS. Residues 174 to 187 are Cytoplasmic-facing; sequence RGFCVGQFTFLKDP. Residues 188–205 traverse the membrane as a helical segment; the sequence is WNWLDFMVISMAYLTELV. Topologically, residues 206-211 are extracellular; it reads DLGNVS. Residue Asn-209 is glycosylated (N-linked (GlcNAc...) asparagine). The chain crosses the membrane as a helical span at residues 212–228; it reads VLRTFRVLRALKTITVI. The Cytoplasmic portion of the chain corresponds to 229 to 247; the sequence is PGLKTIVGALIQSVKKLAD. A helical membrane pass occupies residues 248 to 267; that stretch reads AMVLTVFCLSVFALIGLQLF. At 268 to 368 the chain is on the extracellular side; sequence MGNLRQKCVL…PNYGYTSYDS (101 aa). A disulfide bridge links Cys-275 with Cys-337. N-linked (GlcNAc...) asparagine glycans are attached at residues Asn-284, Asn-304, and Asn-339. A disulfide bond links Cys-346 and Cys-352. An intramembrane region (pore-forming) is located at residues 369-393; that stretch reads FGWAFLALFRLMTQDFWENLFQLTL. Topologically, residues 394–400 are extracellular; it reads RAAGKTY. A helical membrane pass occupies residues 401–421; it reads MIFFVVVIFLGSFYLINLILA. The Cytoplasmic portion of the chain corresponds to 422–515; the sequence is VVAMAYAEQN…RCLSAIVMDP (94 aa). One copy of the II repeat lies at 497-768; sequence CCSCWRHLKR…QIAVNRIKRA (272 aa). Residues 516–534 form a helical membrane-spanning segment; it reads FVDLGITICIILNTIFMAM. The Extracellular portion of the chain corresponds to 535–545; that stretch reads EHYPMSADFEE. Residues 546-565 traverse the membrane as a helical segment; it reads LLSVGNLVFTGIFTCEMVLK. Residues 566–579 are Cytoplasmic-facing; the sequence is ILAMDPYFYFQVGW. The helical transmembrane segment at 580-599 threads the bilayer; the sequence is NIFDSIIVTMSLVELGLANV. Topologically, residues 600 to 601 are extracellular; sequence QG. The helical transmembrane segment at 602-619 threads the bilayer; that stretch reads LSVLRSFRLMRVFKLAKS. The Cytoplasmic segment spans residues 620–635; that stretch reads WPTLNMLIKIIGNSVG. Residues 636–654 form a helical membrane-spanning segment; it reads ALGNLTLVLAIIVFIFAVV. At 655–683 the chain is on the extracellular side; sequence GMQLFGKNYKDCVCRISEDCKLPRWHMND. A disulfide bond links Cys-668 and Cys-674. The segment at residues 684–704 is an intramembrane region (pore-forming); sequence FFHAFLIIFRVLCGEWIDTMW. Topologically, residues 705 to 715 are extracellular; the sequence is DCMEVSGQTMC. An intrachain disulfide couples Cys-706 to Cys-715. Residues 716-734 traverse the membrane as a helical segment; that stretch reads LIVYMMVLVIGNLVVLNLF. The Cytoplasmic segment spans residues 735–915; the sequence is LALLLSSFSG…ACFIIVENNY (181 aa). The disordered stretch occupies residues 824 to 865; the sequence is EAESDSEDSDDDDVDEDKHSRCDESSFCSTVQDPEVKENEAD. Residues 825-838 show a composition bias toward acidic residues; that stretch reads AESDSEDSDDDDVD. An III repeat occupies 896 to 1211; that stretch reads KGKVWCNIRR…KKYYNAMKKL (316 aa). The chain crosses the membrane as a helical span at residues 916–933; that stretch reads FESFIVFMILLSSGALAF. Residues 934–946 lie on the Extracellular side of the membrane; that stretch reads EDIYLEKHQLIKT. The chain crosses the membrane as a helical span at residues 947 to 965; the sequence is ILEYADKVFTYVFVVEMVL. Over 966–979 the chain is Cytoplasmic; that stretch reads KWFAYGFKSYFSNA. Residues 980 to 998 traverse the membrane as a helical segment; sequence WCWLDFLIVDVSLVSLTAN. Over 999 to 1006 the chain is Extracellular; that stretch reads ILGYSELG. The helical transmembrane segment at 1007–1025 threads the bilayer; it reads AIKSLRTLRALRPLRALSR. The Cytoplasmic portion of the chain corresponds to 1026-1042; sequence FEGMRVVVNALVGAVPS. The helical transmembrane segment at 1043-1062 threads the bilayer; the sequence is IFNVLLVCLIFWLIFSIMGV. The Extracellular segment spans residues 1063-1115; it reads NLFAGKFSYCFNETSQEQFDKKIVNNKTECIALIEANFTEVRWKNLKVNYDNV. A disulfide bond links Cys-1072 and Cys-1092. Asn-1074 and Asn-1088 each carry an N-linked (GlcNAc...) asparagine glycan. An intramembrane region (pore-forming) is located at residues 1116 to 1137; the sequence is GIGYLSLLQVATFKGWMEIMYA. Residues 1138-1154 lie on the Extracellular side of the membrane; that stretch reads AVDSRDVESQPIYEVNI. A helical membrane pass occupies residues 1155-1176; that stretch reads YMYLYFVIFIIFGSFFTLNLFI. The Cytoplasmic portion of the chain corresponds to 1177 to 1239; sequence GVIIDNFNQQ…LVFDLVTKQI (63 aa). Residues 1195 to 1197 are important for rapid channel inactivation; the sequence is IFM. An IV repeat occupies 1220 to 1517; the sequence is VPRPENALQG…WEKFDPDATQ (298 aa). The helical transmembrane segment at 1240–1257 threads the bilayer; the sequence is FDVFIMVLICLNMVTMMV. The Extracellular segment spans residues 1258 to 1268; the sequence is ETDEQTKEKED. Residues 1269–1287 traverse the membrane as a helical segment; the sequence is ILYWINVIFIVIFTTECIL. The Cytoplasmic portion of the chain corresponds to 1288-1299; the sequence is KTIALRRHYFSI. The helical transmembrane segment at 1300–1317 threads the bilayer; that stretch reads GWNVFDFVVVILSILGLL. Residues 1318–1330 are Extracellular-facing; that stretch reads LADIIEKYFVSPT. The chain crosses the membrane as a helical span at residues 1331 to 1347; the sequence is LFRVIRLARIGRVLRLI. Residues 1348 to 1366 are Cytoplasmic-facing; the sequence is RGAKGIRTLLFALMMSLPA. The helical transmembrane segment at 1367 to 1384 threads the bilayer; that stretch reads LFNIGLLLFLIMFIFSIF. Over 1385–1406 the chain is Extracellular; that stretch reads GMSNFAYVKKEAMIDDMFNFET. The segment at residues 1407–1429 is an intramembrane region (pore-forming); sequence FGNSMICLFMITTSAGWDGLLSP. The Extracellular portion of the chain corresponds to 1430–1458; sequence IMNKPPDCDPDLENPGTTVRGNCGSPAIG. A disulfide bridge links Cys-1437 with Cys-1452. The helical transmembrane segment at 1459–1481 threads the bilayer; sequence IVFFSTYIIMSFLVVVNMYIAII. Topologically, residues 1482-1715 are cytoplasmic; it reads LENFNVATEE…LGTSERESLV (234 aa). One can recognise an IQ domain in the interval 1611–1640; sequence EEVAARVIQRAYRKYLLQRTVRLASFTYRE.

It belongs to the sodium channel (TC 1.A.1.10) family. Nav1.4/SCN4A subfamily. As to quaternary structure, voltage-gated sodium (Nav) channels consist of an ion-conducting alpha subunit which is functional on its own associated with regulatory beta subunits.

Its subcellular location is the cell membrane. The enzyme catalyses Na(+)(in) = Na(+)(out). Its function is as follows. Pore-forming subunit of a voltage-gated sodium (Nav) channel that directly mediates the depolarizing phase of action potentials in excitable membranes. Navs, also called VGSCs (voltage-gated sodium channels) or VDSCs (voltage-dependent sodium channels), operate by switching between closed and open conformations depending on the voltage difference across the membrane. In the open conformation they allow Na(+) ions to selectively pass through the pore, along their electrochemical gradient. The influx of Na+ ions provokes membrane depolarization, initiating the propagation of electrical signals throughout cells and tissues. This is Sodium channel protein type 4 subunit alpha B (scn4ab) from Tetraodon nigroviridis (Spotted green pufferfish).